A 359-amino-acid chain; its full sequence is 5-amino-6-(D-ribitylamino)uracil--L-tyrosine 4-hydroxyphenyl transferase (359 aa).

A Radical SAM core domain is found at Val45–Lys282. Residues Cys59, Cys63, and Cys66 each contribute to the [4Fe-4S] cluster site.

The protein belongs to the radical SAM superfamily. CofH family. As to quaternary structure, consists of two subunits, CofG and CofH. The cofactor is [4Fe-4S] cluster.

It catalyses the reaction 5-amino-6-(D-ribitylamino)uracil + L-tyrosine + S-adenosyl-L-methionine = 5-amino-5-(4-hydroxybenzyl)-6-(D-ribitylimino)-5,6-dihydrouracil + 2-iminoacetate + 5'-deoxyadenosine + L-methionine + H(+). It functions in the pathway cofactor biosynthesis; coenzyme F0 biosynthesis. Its function is as follows. Catalyzes the radical-mediated synthesis of 5-amino-5-(4-hydroxybenzyl)-6-(D-ribitylimino)-5,6-dihydrouracil from 5-amino-6-(D-ribitylamino)uracil and L-tyrosine. This Methanococcus vannielii (strain ATCC 35089 / DSM 1224 / JCM 13029 / OCM 148 / SB) protein is 5-amino-6-(D-ribitylamino)uracil--L-tyrosine 4-hydroxyphenyl transferase.